A 609-amino-acid chain; its full sequence is N-acetyltransferase ESCO2 (609 aa).

Disordered regions lie at residues 1 to 71 (MLSR…RVSP), 100 to 165 (EAKS…TDQV), 197 to 241 (KKPT…SPVR), and 314 to 357 (PDHD…LTAT). 2 stretches are compositionally biased toward polar residues: residues 13-22 (AESNPSKKQI) and 41-54 (ISLNSPQKIPSTPK). The span at 126–135 (PAKKVQKKPR) shows a compositional bias: basic residues. The span at 214-230 (PTYEKPSIRKPVREKEL) shows a compositional bias: basic and acidic residues. The span at 345-355 (PLNSSTPSALT) shows a compositional bias: polar residues. The CCHH-type zinc-finger motif lies at 392-416 (TTCASCGMLYSTDSPEDNFQHTQFH).

This sequence belongs to the acetyltransferase family. ECO subfamily.

It is found in the nucleus. It localises to the chromosome. The enzyme catalyses L-lysyl-[protein] + acetyl-CoA = N(6)-acetyl-L-lysyl-[protein] + CoA + H(+). In terms of biological role, acetyltransferase required for the establishment of sister chromatid cohesion. Couples the processes of cohesion and DNA replication to ensure that only sister chromatids become paired together. Essential for early development. The protein is N-acetyltransferase ESCO2 (esco2) of Danio rerio (Zebrafish).